The following is a 651-amino-acid chain: DNA ligase (651 aa).

NAD(+)-binding positions include aspartate 30–aspartate 34, serine 79–methionine 80, and glutamate 105. Residue lysine 107 is the N6-AMP-lysine intermediate of the active site. Arginine 128, glutamate 162, and lysine 301 together coordinate NAD(+). Residues cysteine 395, cysteine 398, cysteine 411, and cysteine 416 each coordinate Zn(2+). Positions alanine 570–valine 651 constitute a BRCT domain.

The protein belongs to the NAD-dependent DNA ligase family. LigA subfamily. Mg(2+) is required as a cofactor. It depends on Mn(2+) as a cofactor.

The catalysed reaction is NAD(+) + (deoxyribonucleotide)n-3'-hydroxyl + 5'-phospho-(deoxyribonucleotide)m = (deoxyribonucleotide)n+m + AMP + beta-nicotinamide D-nucleotide.. In terms of biological role, DNA ligase that catalyzes the formation of phosphodiester linkages between 5'-phosphoryl and 3'-hydroxyl groups in double-stranded DNA using NAD as a coenzyme and as the energy source for the reaction. It is essential for DNA replication and repair of damaged DNA. This is DNA ligase from Campylobacter lari (strain RM2100 / D67 / ATCC BAA-1060).